A 71-amino-acid chain; its full sequence is uncharacterized protein (71 aa).

This is an uncharacterized protein from Haemophilus influenzae (strain ATCC 51907 / DSM 11121 / KW20 / Rd).